We begin with the raw amino-acid sequence, 140 residues long: General stress protein 26 (140 aa).

This Bacillus subtilis (strain 168) protein is General stress protein 26 (ydaG).